A 465-amino-acid chain; its full sequence is tRNA-2-methylthio-N(6)-dimethylallyladenosine synthase (465 aa).

The MTTase N-terminal domain occupies R5 to N125. 6 residues coordinate [4Fe-4S] cluster: C14, C50, C88, C166, C170, and C173. The Radical SAM core domain maps to R152–A384. The TRAM domain occupies K387–T449.

This sequence belongs to the methylthiotransferase family. MiaB subfamily. Monomer. [4Fe-4S] cluster serves as cofactor.

It is found in the cytoplasm. It carries out the reaction N(6)-dimethylallyladenosine(37) in tRNA + (sulfur carrier)-SH + AH2 + 2 S-adenosyl-L-methionine = 2-methylsulfanyl-N(6)-dimethylallyladenosine(37) in tRNA + (sulfur carrier)-H + 5'-deoxyadenosine + L-methionine + A + S-adenosyl-L-homocysteine + 2 H(+). In terms of biological role, catalyzes the methylthiolation of N6-(dimethylallyl)adenosine (i(6)A), leading to the formation of 2-methylthio-N6-(dimethylallyl)adenosine (ms(2)i(6)A) at position 37 in tRNAs that read codons beginning with uridine. The polypeptide is tRNA-2-methylthio-N(6)-dimethylallyladenosine synthase (Bradyrhizobium diazoefficiens (strain JCM 10833 / BCRC 13528 / IAM 13628 / NBRC 14792 / USDA 110)).